Consider the following 528-residue polypeptide: Biotin carboxylase 1, chloroplastic (528 aa).

A chloroplast-targeting transit peptide spans 1–51 (MEATLPVCKSVTSTPGLFMGKTSGIRSSQCSFMMGNKVNFPRQRAQTAHVH). Residues lysine 179, lysine 221, 227–228 (GG), 263–266 (EKYV), and histidine 271 contribute to the ATP site. An ATP-grasp domain is found at 183–380 (RETMKKAGVP…LIEEQIRVAM (198 aa)). Position 300 (lysine 300) interacts with hydrogencarbonate. The ATP site is built by glutamate 338 and glutamate 351. Glutamate 338, glutamate 351, and asparagine 353 together coordinate Mg(2+). Mn(2+) contacts are provided by glutamate 338, glutamate 351, and asparagine 353. Positions 355, 358, and 401 each coordinate hydrogencarbonate. Arginine 355 is a catalytic residue. Arginine 401 contacts biotin.

As to quaternary structure, acetyl-CoA carboxylase is a heterohexamer composed of biotin carboxyl carrier protein, biotin carboxylase and two subunits each of ACCase subunit alpha and ACCase plastid-coded subunit beta (accD). Requires Mg(2+) as cofactor. It depends on Mn(2+) as a cofactor.

Its subcellular location is the plastid. It is found in the chloroplast. It catalyses the reaction N(6)-biotinyl-L-lysyl-[protein] + hydrogencarbonate + ATP = N(6)-carboxybiotinyl-L-lysyl-[protein] + ADP + phosphate + H(+). Its pathway is lipid metabolism; malonyl-CoA biosynthesis; malonyl-CoA from acetyl-CoA: step 1/1. Functionally, this protein is a component of the acetyl coenzyme A carboxylase complex; first, biotin carboxylase catalyzes the carboxylation of the carrier protein and then the transcarboxylase transfers the carboxyl group to form malonyl-CoA. This is Biotin carboxylase 1, chloroplastic from Populus trichocarpa (Western balsam poplar).